Consider the following 839-residue polypeptide: Toll-like receptor 4 (839 aa).

A signal peptide spans 1 to 23 (MMSASRLAGTLIPAMAFLSCVRP). At 24–631 (ESWEPCVEVV…SLNITCQMNK (608 aa)) the chain is on the extracellular side. The cysteines at positions 29 and 40 are disulfide-linked. N-linked (GlcNAc...) asparagine glycosylation is present at asparagine 35. LRR repeat units lie at residues 55-76 (STKN…SFFS), 79-100 (ELQV…AYQS), 103-124 (HLST…AFSG), 127-148 (SLQK…PIGH), and 151-172 (TLKE…EYFS). N-linked (GlcNAc...) asparagine glycosylation is present at asparagine 173. LRR repeat units lie at residues 176 to 199 (NLEH…RVLH), 205 to 225 (NLSL…AFKE), and 227 to 247 (RLHK…KTCI). The N-linked (GlcNAc...) asparagine glycan is linked to asparagine 205. Cysteine 281 and cysteine 306 are oxidised to a cystine. N-linked (GlcNAc...) asparagine glycans are attached at residues asparagine 282 and asparagine 309. LRR repeat units follow at residues 331-351 (GWQH…LKLK), 352-373 (SLKR…VDLP), 374-394 (SLEF…CSQS), 400-422 (SLKY…LGLE), 423-444 (QLEH…SVFL), 448-456 (NLIYLDISH), 472-495 (SLEV…FTEL), 497-518 (NLTF…AFNS), 521-542 (SLQV…PYKC), and 545-565 (SLQV…QELQ). An intrachain disulfide couples cysteine 390 to cysteine 391. N-linked (GlcNAc...) asparagine glycans are attached at residues asparagine 497 and asparagine 526. The N-linked (GlcNAc...) asparagine glycan is linked to asparagine 575. The region spanning 579-629 (NDFACTCEHQSFLQWIKDQRQLLVEVERMECATPSDKQGMPVLSLNITCQM) is the LRRCT domain. Cystine bridges form between cysteine 583–cysteine 609 and cysteine 585–cysteine 627. Asparagine 624 and asparagine 630 each carry an N-linked (GlcNAc...) asparagine glycan. The chain crosses the membrane as a helical span at residues 632–652 (TIIGVSVLSVLVVSVVAVLVY). At 653-839 (KFYFHLMLLA…GCNWQEATSI (187 aa)) the chain is on the cytoplasmic side. The TIR domain occupies 672 to 815 (NIYDAFVIYS…IFWRRLRKAL (144 aa)).

This sequence belongs to the Toll-like receptor family. As to quaternary structure, belongs to the lipopolysaccharide (LPS) receptor, a multi-protein complex containing at least CD14, LY96 and TLR4. Binding to bacterial LPS leads to homodimerization. Interacts with LY96 via the extracellular domain. Interacts with MYD88. Interacts (via TIR domains) with TIRAP. Interacts with TICAM2. Interacts with NOX4. Interacts with CNPY3. Interacts with HSP90B1. The interaction with both CNPY3 and HSP90B1 is required for proper folding in the endoplasmic reticulum. Interacts with MAP3K21; this interaction leads to negative regulation of TLR4 signaling. Interacts with CD36, following CD36 stimulation by oxLDL or amyloid-beta 42, and forms a heterodimer with TLR6. The trimeric complex is internalized and triggers inflammatory response. LYN kinase activity facilitates TLR4-TLR6 heterodimerization and signal initiation. Interacts with TICAM1 in response to LPS in a WDFY1-dependent manner. Interacts with WDFY1 in response to LPS. Interacts with SMPDL3B. Interacts with CEACAM1; upon lipopolysaccharide stimulation, forms a complex including TLR4 and the phosphorylated form of SYK and CEACAM1, which in turn, recruits PTPN6 that dephosphorylates SYK, reducing the production of reactive oxygen species (ROS) and lysosome disruption, which in turn, reduces the activity of the inflammasome. Interacts with RFTN1; the interaction occurs in response to lipopolysaccharide stimulation. Interacts with SCIMP; the interaction occurs in response to lipopolysaccharide stimulation and is enhanced by phosphorylation of SCIMP by LYN. This interaction facilitates the phosphorylation of TLR4 by LYN which elicits a selective cytokine response in macrophages. Interacts with TRAF3IP3. Interacts with TREM1; this interaction enhances TLR4-mediated inflammatory response. Interacts with ZG16B/PAUF. Interacts with CD82; this interaction inhibits TLR4-mediated signaling pathway. Interacts with neutrophil recruitment protein from Aedes aegypti saliva; the interaction probably promotes activation of canonical NF-kappa-B signaling in skin-resident macrophages and subsequent expression of neutrophil chemoattractants. In terms of assembly, (Microbial infection) In case of infection, interacts with uropathogenic E.coli protein TcpC. (Microbial infection) In case of infection, interacts with B.melitensis protein TcpB; TcpB abolishes the TLR4-TIRAP interaction in vitro. As to quaternary structure, (Microbial infection) Interacts with ebolavirus protein GP; this interaction leads to the production of proinflammatory cytokines and suppressor of cytokine signaling 1/SOCS1. Post-translationally, N-Glycosylation of Asn-526 and Asn-575 by STT3A-containing OST-A complex is necessary for the expression of TLR4 on the cell surface and the LPS-response. Likewise, mutants lacking two or more of the other N-glycosylation sites were deficient in interaction with LPS. In terms of processing, phosphorylated on tyrosine residues by LYN after binding lipopolysaccharide. Ubiquitinated by RNF128 via 'Lys-28'-linked polyubiquitin chains, leading to proteasomal degradation. In terms of tissue distribution, highly expressed in placenta, spleen and peripheral blood leukocytes. Detected in monocytes, macrophages, dendritic cells and several types of T-cells. Expressed in pancreatic cancer cells but not in normal pancreatic cells (at protein level).

The protein localises to the cell membrane. It localises to the early endosome. It is found in the cell projection. The protein resides in the ruffle. Transmembrane receptor that functions as a pattern recognition receptor recognizing pathogen- and damage-associated molecular patterns (PAMPs and DAMPs) to induce innate immune responses via downstream signaling pathways. At the plasma membrane, cooperates with LY96 to mediate the innate immune response to bacterial lipopolysaccharide (LPS). Also involved in LPS-independent inflammatory responses triggered by free fatty acids, such as palmitate, and Ni(2+). Mechanistically, acts via MYD88, TIRAP and TRAF6, leading to NF-kappa-B activation, cytokine secretion and the inflammatory response. Alternatively, CD14-mediated TLR4 internalization via endocytosis is associated with the initiation of a MYD88-independent signaling via the TICAM1-TBK1-IRF3 axis leading to type I interferon production. In addition to the secretion of proinflammatory cytokines, initiates the activation of NLRP3 inflammasome and formation of a positive feedback loop between autophagy and NF-kappa-B signaling cascade. In complex with TLR6, promotes inflammation in monocytes/macrophages by associating with TLR6 and the receptor CD86. Upon ligand binding, such as oxLDL or amyloid-beta 42, the TLR4:TLR6 complex is internalized and triggers inflammatory response, leading to NF-kappa-B-dependent production of CXCL1, CXCL2 and CCL9 cytokines, via MYD88 signaling pathway, and CCL5 cytokine, via TICAM1 signaling pathway. In myeloid dendritic cells, vesicular stomatitis virus glycoprotein G but not LPS promotes the activation of IRF7, leading to type I IFN production in a CD14-dependent manner. Required for the migration-promoting effects of ZG16B/PAUF on pancreatic cancer cells. The sequence is that of Toll-like receptor 4 (TLR4) from Homo sapiens (Human).